Reading from the N-terminus, the 461-residue chain is UPF0053 protein YhdT (461 aa).

A CNNM transmembrane domain is found at 1–202; sequence MDDIDSLILI…LKNGEINPSE (202 aa). The next 3 membrane-spanning stretches (helical) occupy residues 8–28, 103–123, and 137–157; these read ILIGVLIALTAFFVASEFAIV, VSFAVAYGLITFLHVVVGELA, and LLIAGPLRLFYLLLFPFIWIL. 2 consecutive CBS domains span residues 221 to 280 and 290 to 347; these read MIPR…MTEE and YVRP…IRDE.

This sequence belongs to the UPF0053 family.

The protein resides in the cell membrane. This is UPF0053 protein YhdT (yhdT) from Bacillus subtilis (strain 168).